Reading from the N-terminus, the 507-residue chain is Probable Xaa-Pro aminopeptidase ARB_01886 (507 aa).

Mn(2+)-binding residues include aspartate 275, aspartate 286, glutamate 434, and glutamate 478.

The protein belongs to the peptidase M24B family. Mn(2+) serves as cofactor.

It catalyses the reaction Release of any N-terminal amino acid, including proline, that is linked to proline, even from a dipeptide or tripeptide.. Functionally, catalyzes the removal of a penultimate prolyl residue from the N-termini of peptides. The sequence is that of Probable Xaa-Pro aminopeptidase ARB_01886 from Arthroderma benhamiae (strain ATCC MYA-4681 / CBS 112371) (Trichophyton mentagrophytes).